A 312-amino-acid polypeptide reads, in one-letter code: tRNA uridine(34) hydroxylase (312 aa).

Positions 123–217 (SDPEVLLIDT…YLEEVPQEQS (95 aa)) constitute a Rhodanese domain. Cys-177 functions as the Cysteine persulfide intermediate in the catalytic mechanism. Over residues 282–293 (ARERQKQIELAR) the composition is skewed to basic and acidic residues. Residues 282–312 (ARERQKQIELARQRNQPHPLGRDPRQSTLEN) are disordered.

Belongs to the TrhO family.

The enzyme catalyses uridine(34) in tRNA + AH2 + O2 = 5-hydroxyuridine(34) in tRNA + A + H2O. Catalyzes oxygen-dependent 5-hydroxyuridine (ho5U) modification at position 34 in tRNAs. The polypeptide is tRNA uridine(34) hydroxylase (Pseudomonas aeruginosa (strain UCBPP-PA14)).